Reading from the N-terminus, the 505-residue chain is Protein disulfide-isomerase A3 (505 aa).

The first 24 residues, 1 to 24 (MRLRRLALFPGVALLLAAARLAAA), serve as a signal peptide directing secretion. Residues 25–133 (SDVLELTDDN…IVSHLKKQAG (109 aa)) enclose the Thioredoxin 1 domain. Active-site nucleophile residues include cysteine 57 and cysteine 60. Cysteine 57 and cysteine 60 are oxidised to a cystine. Residue lysine 61 is modified to N6-methyllysine. Cysteine 85 and cysteine 92 are disulfide-bonded. At lysine 129 the chain carries N6-succinyllysine. Position 152 is an N6-acetyllysine (lysine 152). Residue lysine 218 is modified to N6-succinyllysine. At lysine 252 the chain carries N6-acetyllysine. Residue threonine 319 is modified to Phosphothreonine. Residues 343–485 (SRDGKALERF…FISYLQREAT (143 aa)) form the Thioredoxin 2 domain. Lysine 362 carries the N6-acetyllysine modification. Residues cysteine 406 and cysteine 409 each act as nucleophile in the active site. A disulfide bridge connects residues cysteine 406 and cysteine 409. Positions 484–505 (ATNPPVIQEEKPKKKKKAQEDL) are disordered. The segment covering 491–505 (QEEKPKKKKKAQEDL) has biased composition (basic and acidic residues). Position 494 is an N6-acetyllysine (lysine 494). The Prevents secretion from ER signature appears at 502–505 (QEDL).

Belongs to the protein disulfide isomerase family. In terms of assembly, part of the major histocompatibility complex class I (MHC I) peptide loading complex composed of TAP1, TAP2, B2M, MHC heavy chain, TAPBP, PDIA3, and CALR. Interacts with ERP27 and CANX. Interacts with SERPINA2 and with SERPINA1. Interacts with ATP2A2. Within the major histocompatibility complex class I (MHC I) peptide loading complex forms reversible disulfide-linked heterodimers with TAPBP as part of its protein folding chaperone activity. This is essential to assist the dynamic assembly of the MHC I complex with high affinity antigens in the endoplasmic reticulum. Post-translationally, phosphorylated.

It localises to the endoplasmic reticulum. Its subcellular location is the endoplasmic reticulum lumen. It is found in the melanosome. The catalysed reaction is Catalyzes the rearrangement of -S-S- bonds in proteins.. Its function is as follows. Protein disulfide isomerase that catalyzes the formation, isomerization, and reduction or oxidation of disulfide bonds in client proteins and functions as a protein folding chaperone. Core component of the major histocompatibility complex class I (MHC I) peptide loading complex where it functions as an essential folding chaperone for TAPBP. Through TAPBP, assists the dynamic assembly of the MHC I complex with high affinity antigens in the endoplasmic reticulum. Therefore, plays a crucial role in the presentation of antigens to cytotoxic T cells in adaptive immunity. This Chlorocebus aethiops (Green monkey) protein is Protein disulfide-isomerase A3 (PDIA3).